Consider the following 93-residue polypeptide: Large ribosomal subunit protein bL27 (93 aa).

A propeptide spanning residues 1 to 10 (MRFLLGLQYF) is cleaved from the precursor. A disordered region spans residues 14–36 (KGVGSTKNGRDSESKRLGAKKSD). The span at 21–36 (NGRDSESKRLGAKKSD) shows a compositional bias: basic and acidic residues.

It belongs to the bacterial ribosomal protein bL27 family. In terms of processing, the N-terminus is cleaved by ribosomal processing cysteine protease Prp.

The polypeptide is Large ribosomal subunit protein bL27 (Mycoplasma capricolum subsp. capricolum (strain California kid / ATCC 27343 / NCTC 10154)).